The sequence spans 250 residues: Acidic leucine-rich nuclear phosphoprotein 32 family member E (250 aa).

Serine 8 bears the Phosphoserine mark. LRR repeat units follow at residues 43-64 (ELEF…PSLP), 65-87 (KLRK…AEKC), and 89-110 (NLTY…EALQ). Positions 123–161 (CEITTLEDYRESIFELLPQVTYLDGFDAEDNEAPDSEAD) constitute an LRRCT domain. Acidic residues-rich tracts occupy residues 149–171 (DAED…DGDE), 178–191 (EYEE…EGSE), and 205–227 (IQDE…EEEA). The interval 149-250 (DAEDNEAPDS…EGEDDDEDDD (102 aa)) is disordered. The tract at residues 194–247 (EVGLSYLMKEDIQDEEDDDDYVEEEEEEGGEEEADVRGEKRKREAEDEGEDDDE) is ZID domain. Positions 228 to 238 (DVRGEKRKREA) are enriched in basic and acidic residues. The segment covering 239–250 (EDEGEDDDEDDD) has biased composition (acidic residues).

This sequence belongs to the ANP32 family. Component of a SWR1-like complex. Interacts with H2A.Z/H2AZ1. Post-translationally, phosphorylated. The phosphorylation is nuclear localization signal (NLS)-dependent.

It localises to the cytoplasm. Its subcellular location is the nucleus. Functionally, histone chaperone that specifically mediates the genome-wide removal of histone H2A.Z/H2AZ1 from the nucleosome: removes H2A.Z/H2AZ1 from its normal sites of deposition, especially from enhancer and insulator regions. Not involved in deposition of H2A.Z/H2AZ1 in the nucleosome. May stabilize the evicted H2A.Z/H2AZ1-H2B dimer, thus shifting the equilibrium towards dissociation and the off-chromatin state. Inhibits activity of protein phosphatase 2A (PP2A). Does not inhibit protein phosphatase 1. May play a role in cerebellar development and synaptogenesis. This Danio rerio (Zebrafish) protein is Acidic leucine-rich nuclear phosphoprotein 32 family member E (anp32e).